A 242-amino-acid chain; its full sequence is DnaJ homolog subfamily B member 3 (242 aa).

The region spanning 1–69 (MVDYYEVLGV…RKREVYDRCG (69 aa)) is the J domain.

As to expression, testis specific. Expression is confined to the germline without any contribution of the somatic components.

Its function is as follows. May operate as a co-chaperone of the male germ cell- and haploid stage-specific Hsp70 proteins. This Mus musculus (Mouse) protein is DnaJ homolog subfamily B member 3 (Dnajb3).